Reading from the N-terminus, the 209-residue chain is Protease (209 aa).

Catalysis depends on residues His55, Asp72, and Cys123.

The protein belongs to the peptidase C5 family. In terms of assembly, interacts with protease cofactor pVI-C; this interaction is necessary for protease activation.

It is found in the virion. Its subcellular location is the host nucleus. The catalysed reaction is Cleaves proteins of the adenovirus and its host cell at two consensus sites: -Yaa-Xaa-Gly-Gly-|-Xaa- and -Yaa-Xaa-Gly-Xaa-|-Gly- (in which Yaa is Met, Ile or Leu, and Xaa is any amino acid).. Requires DNA and protease cofactor for maximal activation. Inside nascent virions, becomes partially activated by binding to the viral DNA, allowing it to cleave the cofactor that binds to the protease and fully activates it. Actin, like the viral protease cofactor, seems to act as a cofactor in the cleavage of cytokeratin 18 and of actin itself. Its function is as follows. Cleaves viral precursor proteins (pTP, pIIIa, pVI, pVII, pVIII, and pX) inside newly assembled particles giving rise to mature virions. Protease complexed to its cofactor slides along the viral DNA to specifically locate and cleave the viral precursors. Mature virions have a weakened organization compared to the unmature virions, thereby facilitating subsequent uncoating. Without maturation, the particle lacks infectivity and is unable to uncoat. Late in adenovirus infection, in the cytoplasm, may participate in the cytoskeleton destruction. Cleaves host cell cytoskeletal keratins K7 and K18. The sequence is that of Protease from Human adenovirus D serotype 9 (HAdV-9).